A 758-amino-acid chain; its full sequence is 5-methyltetrahydropteroyltriglutamate--homocysteine methyltransferase (758 aa).

5-methyltetrahydropteroyltri-L-glutamate is bound by residues 17-20 (RELK) and Lys-114. Residues 429 to 431 (IGS) and Glu-482 each bind L-homocysteine. L-methionine contacts are provided by residues 429 to 431 (IGS) and Glu-482. Residues 513-514 (RC) and Trp-559 each bind 5-methyltetrahydropteroyltri-L-glutamate. Position 597 (Asp-597) interacts with L-homocysteine. Asp-597 serves as a coordination point for L-methionine. Glu-603 contacts 5-methyltetrahydropteroyltri-L-glutamate. Zn(2+) contacts are provided by His-639, Cys-641, and Glu-663. His-692 serves as the catalytic Proton donor. Cys-724 contributes to the Zn(2+) binding site.

It belongs to the vitamin-B12 independent methionine synthase family. Zn(2+) serves as cofactor.

The catalysed reaction is 5-methyltetrahydropteroyltri-L-glutamate + L-homocysteine = tetrahydropteroyltri-L-glutamate + L-methionine. It participates in amino-acid biosynthesis; L-methionine biosynthesis via de novo pathway; L-methionine from L-homocysteine (MetE route): step 1/1. In terms of biological role, catalyzes the transfer of a methyl group from 5-methyltetrahydrofolate to homocysteine resulting in methionine formation. The chain is 5-methyltetrahydropteroyltriglutamate--homocysteine methyltransferase from Buchnera aphidicola subsp. Acyrthosiphon pisum (strain APS) (Acyrthosiphon pisum symbiotic bacterium).